Consider the following 427-residue polypeptide: UPF0229 protein YeaH (427 aa).

Positions 79–90 (NDHFVQNDRIER) are enriched in basic and acidic residues. The interval 79 to 110 (NDHFVQNDRIERPQGGGGGSGSGQGQASQDGE) is disordered. Positions 92–102 (QGGGGGSGSGQ) are enriched in gly residues.

It belongs to the UPF0229 family.

The polypeptide is UPF0229 protein YeaH (Shigella boydii serotype 18 (strain CDC 3083-94 / BS512)).